A 315-amino-acid polypeptide reads, in one-letter code: Malate dehydrogenase (315 aa).

NAD(+)-binding positions include 7 to 12 (GAGNIG) and aspartate 32. Substrate-binding residues include arginine 81 and arginine 87. Residues asparagine 94 and 117 to 119 (VTN) contribute to the NAD(+) site. Positions 119 and 150 each coordinate substrate. The Proton acceptor role is filled by histidine 174.

It belongs to the LDH/MDH superfamily. MDH type 3 family.

It carries out the reaction (S)-malate + NAD(+) = oxaloacetate + NADH + H(+). Functionally, catalyzes the reversible oxidation of malate to oxaloacetate. This is Malate dehydrogenase from Neorickettsia sennetsu (strain ATCC VR-367 / Miyayama) (Ehrlichia sennetsu).